Reading from the N-terminus, the 440-residue chain is L-seryl-tRNA(Sec) selenium transferase (440 aa).

At K282 the chain carries N6-(pyridoxal phosphate)lysine.

This sequence belongs to the SelA family. The cofactor is pyridoxal 5'-phosphate.

The protein resides in the cytoplasm. It carries out the reaction L-seryl-tRNA(Sec) + selenophosphate + H(+) = L-selenocysteinyl-tRNA(Sec) + phosphate. Its pathway is aminoacyl-tRNA biosynthesis; selenocysteinyl-tRNA(Sec) biosynthesis; selenocysteinyl-tRNA(Sec) from L-seryl-tRNA(Sec) (bacterial route): step 1/1. In terms of biological role, converts seryl-tRNA(Sec) to selenocysteinyl-tRNA(Sec) required for selenoprotein biosynthesis. This chain is L-seryl-tRNA(Sec) selenium transferase, found in Campylobacter jejuni subsp. jejuni serotype O:2 (strain ATCC 700819 / NCTC 11168).